The primary structure comprises 350 residues: MSKNKLSKGQQRRVNANHQRRLKTSKEKPDYDDNLFGEPDEGIVISRFGMHADVESADGDVHRCNIRRTIRSLVTGDRVVWRPGKPAAEGVNVKGIVEAVHERTSVLTRPDFYDGVKPIAANIDQIVIVSAILPELSLNIIDRYLVACETLQIEPIIVLNKIDLLDDEGMEFVNEQMDIYRNIGYRVLMVSSHTQDGLKPLEEALTGRISIFAGQSGVGKSSLLNALLGLQKEILTNDVSDNSGLGQHTTTAARLYHFPHGGDVIDSPGVREFGLWHLEPEQITQGFVEFHDYLGLCKYRDCKHDTDPGCAIREAVEEGKIAETRFENYHRILESMAQVKTRKNFSDTDD.

Polar residues predominate over residues 1 to 17 (MSKNKLSKGQQRRVNAN). The tract at residues 1-33 (MSKNKLSKGQQRRVNANHQRRLKTSKEKPDYDD) is disordered. A CP-type G domain is found at 104–273 (TSVLTRPDFY…VIDSPGVREF (170 aa)). Residues 160–163 (NKID) and 214–222 (GQSGVGKSS) contribute to the GTP site. Residues cysteine 297, cysteine 302, histidine 304, and cysteine 310 each contribute to the Zn(2+) site.

This sequence belongs to the TRAFAC class YlqF/YawG GTPase family. RsgA subfamily. Monomer. Associates with 30S ribosomal subunit, binds 16S rRNA. Requires Zn(2+) as cofactor.

The protein resides in the cytoplasm. Functionally, one of several proteins that assist in the late maturation steps of the functional core of the 30S ribosomal subunit. Helps release RbfA from mature subunits. May play a role in the assembly of ribosomal proteins into the subunit. Circularly permuted GTPase that catalyzes slow GTP hydrolysis, GTPase activity is stimulated by the 30S ribosomal subunit. In Escherichia coli O6:H1 (strain CFT073 / ATCC 700928 / UPEC), this protein is Small ribosomal subunit biogenesis GTPase RsgA.